A 381-amino-acid chain; its full sequence is Queuine tRNA-ribosyltransferase (381 aa).

Residue Asp92 is the Proton acceptor of the active site. Residues 92-96 (DSGGF), Asp146, Gln190, and Gly217 contribute to the substrate site. The tract at residues 248-254 (GVGRPED) is RNA binding. Asp267 acts as the Nucleophile in catalysis. Positions 272-276 (TRNAR) are RNA binding; important for wobble base 34 recognition. Zn(2+) contacts are provided by Cys305, Cys307, Cys310, and His337.

It belongs to the queuine tRNA-ribosyltransferase family. As to quaternary structure, homodimer. Within each dimer, one monomer is responsible for RNA recognition and catalysis, while the other monomer binds to the replacement base PreQ1. Zn(2+) is required as a cofactor.

It catalyses the reaction 7-aminomethyl-7-carbaguanine + guanosine(34) in tRNA = 7-aminomethyl-7-carbaguanosine(34) in tRNA + guanine. It functions in the pathway tRNA modification; tRNA-queuosine biosynthesis. Its function is as follows. Catalyzes the base-exchange of a guanine (G) residue with the queuine precursor 7-aminomethyl-7-deazaguanine (PreQ1) at position 34 (anticodon wobble position) in tRNAs with GU(N) anticodons (tRNA-Asp, -Asn, -His and -Tyr). Catalysis occurs through a double-displacement mechanism. The nucleophile active site attacks the C1' of nucleotide 34 to detach the guanine base from the RNA, forming a covalent enzyme-RNA intermediate. The proton acceptor active site deprotonates the incoming PreQ1, allowing a nucleophilic attack on the C1' of the ribose to form the product. After dissociation, two additional enzymatic reactions on the tRNA convert PreQ1 to queuine (Q), resulting in the hypermodified nucleoside queuosine (7-(((4,5-cis-dihydroxy-2-cyclopenten-1-yl)amino)methyl)-7-deazaguanosine). The polypeptide is Queuine tRNA-ribosyltransferase (Xanthomonas euvesicatoria pv. vesicatoria (strain 85-10) (Xanthomonas campestris pv. vesicatoria)).